A 919-amino-acid chain; its full sequence is Synphilin-1 (919 aa).

3 disordered regions span residues Ser-80–Asn-99, Gly-108–Leu-140, and Ser-287–Ser-313. Over residues Ser-299–Gly-308 the composition is skewed to polar residues. 4 ANK repeats span residues Asn-349 to Glu-380, Glu-384 to Glu-413, Asp-419 to Ile-448, and Asp-456 to Met-485. Positions Cys-515 to Ser-552 form a coiled coil. 3 disordered regions span residues Ala-549–Asp-615, Arg-666–Ser-713, and Ser-728–Ala-919. The span at Lys-555 to Lys-571 shows a compositional bias: low complexity. An ANK 5 repeat occupies Ala-603–Val-632. Residues Leu-667–Ser-685 show a composition bias toward low complexity. Residues Glu-686–Arg-700 are compositionally biased toward basic and acidic residues. The stretch at Pro-699–Gly-729 is one ANK 6 repeat. A compositionally biased stretch (low complexity) spans Pro-774–Ser-785. Residues Asn-833–Arg-842 are compositionally biased toward basic and acidic residues. The span at Leu-844–Gly-854 shows a compositional bias: polar residues. A compositionally biased stretch (low complexity) spans Asn-874–Gln-886.

As to quaternary structure, homodimer. Heterodimer of isoform 1 and isoform 2. Interacts with SIAH1, SIAH2, SNCA, RNF19A and PRKN. Isoform 2 has a strong tendency to form aggregates and can sequester isoform 1. Ubiquitinated; mediated by SIAH1, SIAH2 or RNF19A and leading to its subsequent proteasomal degradation. In the absence of proteasomal degradation, ubiquitinated SNCAIP accumulates in cytoplasmic inclusion bodies. Isoform 2 is subject to limited ubiquitination that does not lead to proteasomal degradation. In terms of tissue distribution, detected in brain (at protein level). Widely expressed, with highest levels in brain, heart and placenta.

It localises to the cytoplasm. Functionally, isoform 2 inhibits the ubiquitin ligase activity of SIAH1 and inhibits proteasomal degradation of target proteins. Isoform 2 inhibits autoubiquitination and proteasomal degradation of SIAH1, and thereby increases cellular levels of SIAH. Isoform 2 modulates SNCA monoubiquitination by SIAH1. The sequence is that of Synphilin-1 (SNCAIP) from Homo sapiens (Human).